Consider the following 342-residue polypeptide: HTH-type transcriptional regulator GbpR (342 aa).

The HTH lysR-type domain occupies 16–73 (LKLRHLQLFVALDEHRNLHRAAASLTMSQPAASKLLGDLEESLGVTLFERHGRGVEPN). Positions 33-52 (LHRAAASLTMSQPAASKLLG) form a DNA-binding region, H-T-H motif.

This sequence belongs to the LysR transcriptional regulatory family.

Does not seem to be required for sbpA expression. The protein is HTH-type transcriptional regulator GbpR (gbpR) of Azospirillum brasilense.